The sequence spans 261 residues: GTP cyclohydrolase FolE2 (261 aa).

The protein belongs to the GTP cyclohydrolase IV family.

The catalysed reaction is GTP + H2O = 7,8-dihydroneopterin 3'-triphosphate + formate + H(+). It functions in the pathway cofactor biosynthesis; 7,8-dihydroneopterin triphosphate biosynthesis; 7,8-dihydroneopterin triphosphate from GTP: step 1/1. In terms of biological role, converts GTP to 7,8-dihydroneopterin triphosphate. The polypeptide is GTP cyclohydrolase FolE2 (Geobacter metallireducens (strain ATCC 53774 / DSM 7210 / GS-15)).